The sequence spans 157 residues: NADH-quinone oxidoreductase subunit I (157 aa).

2 4Fe-4S ferredoxin-type domains span residues 47 to 78 (YLTK…VKPA) and 94 to 123 (SDFQ…LSNQ). [4Fe-4S] cluster is bound by residues cysteine 58, cysteine 61, cysteine 64, cysteine 68, cysteine 103, cysteine 106, cysteine 109, and cysteine 113.

The protein belongs to the complex I 23 kDa subunit family. NDH-1 is composed of 14 different subunits. Subunits NuoA, H, J, K, L, M, N constitute the membrane sector of the complex. Requires [4Fe-4S] cluster as cofactor.

The protein localises to the cell inner membrane. The catalysed reaction is a quinone + NADH + 5 H(+)(in) = a quinol + NAD(+) + 4 H(+)(out). Functionally, NDH-1 shuttles electrons from NADH, via FMN and iron-sulfur (Fe-S) centers, to quinones in the respiratory chain. The immediate electron acceptor for the enzyme in this species is believed to be ubiquinone. Couples the redox reaction to proton translocation (for every two electrons transferred, four hydrogen ions are translocated across the cytoplasmic membrane), and thus conserves the redox energy in a proton gradient. This is NADH-quinone oxidoreductase subunit I (nuoI) from Protochlamydia amoebophila (strain UWE25).